The primary structure comprises 254 residues: 3-deoxy-manno-octulosonate cytidylyltransferase (254 aa).

This sequence belongs to the KdsB family.

It is found in the cytoplasm. It carries out the reaction 3-deoxy-alpha-D-manno-oct-2-ulosonate + CTP = CMP-3-deoxy-beta-D-manno-octulosonate + diphosphate. Its pathway is nucleotide-sugar biosynthesis; CMP-3-deoxy-D-manno-octulosonate biosynthesis; CMP-3-deoxy-D-manno-octulosonate from 3-deoxy-D-manno-octulosonate and CTP: step 1/1. It participates in bacterial outer membrane biogenesis; lipopolysaccharide biosynthesis. In terms of biological role, activates KDO (a required 8-carbon sugar) for incorporation into bacterial lipopolysaccharide in Gram-negative bacteria. This Chlamydia caviae (strain ATCC VR-813 / DSM 19441 / 03DC25 / GPIC) (Chlamydophila caviae) protein is 3-deoxy-manno-octulosonate cytidylyltransferase.